A 489-amino-acid chain; its full sequence is MKRELLKLSILEAHRCLKNKDFSARELTEAYIGAVEQDTLNAFVTTTPELALAAADRTDGLLQRGEPIHPMSGIPVGVKDLFCTKGVRTTACSNILKNFVPTYESTVSQKLWDSGAVMLGKLNMDEFAMGSSNTYSCFGPVKNPWKGTEGKDLTPGGSSGGSSAAVAGLLCAGALGSDTGGSVRQPAALCGVVGAKPTYGRCSRWGMIAYASSLDQAGVLARTVEDAAVMLNAICGYDQKDSTSSQEAVPDFLGGISRDVRGVRIGIPKEYELPKNRGDIAAMWDQNIKHLLDCGAEIVEISLPHTTYALPVYYILASSEASSNLARYDGIRYGTRVEGETIDEMYELTRSLNFGEEVKRRMLIGAYTLSSGYRRAYYDKAQRVRCLVIRDFEEAFKKVDCILALTTPVEATGIEEPLSAMDRYFTDVFTVPASLAGLPAISVPAGLSERKLPMALQVIGNYHDECGMLNLAAVIYEHSGGVLQHLHGF.

Catalysis depends on charge relay system residues K79 and S158. Residue S182 is the Acyl-ester intermediate of the active site.

This sequence belongs to the amidase family. GatA subfamily. Heterotrimer of A, B and C subunits.

The enzyme catalyses L-glutamyl-tRNA(Gln) + L-glutamine + ATP + H2O = L-glutaminyl-tRNA(Gln) + L-glutamate + ADP + phosphate + H(+). Allows the formation of correctly charged Gln-tRNA(Gln) through the transamidation of misacylated Glu-tRNA(Gln) in organisms which lack glutaminyl-tRNA synthetase. The reaction takes place in the presence of glutamine and ATP through an activated gamma-phospho-Glu-tRNA(Gln). The sequence is that of Glutamyl-tRNA(Gln) amidotransferase subunit A from Anaplasma marginale (strain Florida).